A 232-amino-acid chain; its full sequence is Sugar fermentation stimulation protein homolog (232 aa).

This sequence belongs to the SfsA family.

This Moorella thermoacetica (strain ATCC 39073 / JCM 9320) protein is Sugar fermentation stimulation protein homolog.